Consider the following 293-residue polypeptide: tRNA pseudouridine synthase B (293 aa).

Asp-39 (nucleophile) is an active-site residue.

The protein belongs to the pseudouridine synthase TruB family. Type 1 subfamily.

It catalyses the reaction uridine(55) in tRNA = pseudouridine(55) in tRNA. Responsible for synthesis of pseudouridine from uracil-55 in the psi GC loop of transfer RNAs. This is tRNA pseudouridine synthase B from Streptococcus thermophilus (strain ATCC BAA-250 / LMG 18311).